A 406-amino-acid chain; its full sequence is Cysteine desulfurase (406 aa).

The residue at position 226 (K226) is an N6-(pyridoxal phosphate)lysine. C364 functions as the Cysteine persulfide intermediate in the catalytic mechanism.

It belongs to the class-V pyridoxal-phosphate-dependent aminotransferase family. Csd subfamily. As to quaternary structure, homodimer. Interacts with SufE and the SufBCD complex composed of SufB, SufC and SufD. The interaction with SufE is required to mediate the direct transfer of the sulfur atom from the S-sulfanylcysteine. Requires pyridoxal 5'-phosphate as cofactor.

The protein resides in the cytoplasm. It catalyses the reaction (sulfur carrier)-H + L-cysteine = (sulfur carrier)-SH + L-alanine. It carries out the reaction L-selenocysteine + AH2 = hydrogenselenide + L-alanine + A + H(+). It functions in the pathway cofactor biosynthesis; iron-sulfur cluster biosynthesis. Its function is as follows. Cysteine desulfurases mobilize the sulfur from L-cysteine to yield L-alanine, an essential step in sulfur metabolism for biosynthesis of a variety of sulfur-containing biomolecules. Component of the suf operon, which is activated and required under specific conditions such as oxidative stress and iron limitation. Acts as a potent selenocysteine lyase in vitro, that mobilizes selenium from L-selenocysteine. Selenocysteine lyase activity is however unsure in vivo. This Escherichia coli O8 (strain IAI1) protein is Cysteine desulfurase.